The sequence spans 104 residues: UPF0145 protein HCH_01985 (104 aa).

The protein belongs to the UPF0145 family.

This Hahella chejuensis (strain KCTC 2396) protein is UPF0145 protein HCH_01985.